The sequence spans 65 residues: Large ribosomal subunit protein bL35 (65 aa).

Over residues Met-1–Lys-16 the composition is skewed to basic residues. Residues Met-1–Ser-24 are disordered.

This sequence belongs to the bacterial ribosomal protein bL35 family.

The sequence is that of Large ribosomal subunit protein bL35 from Leuconostoc mesenteroides subsp. mesenteroides (strain ATCC 8293 / DSM 20343 / BCRC 11652 / CCM 1803 / JCM 6124 / NCDO 523 / NBRC 100496 / NCIMB 8023 / NCTC 12954 / NRRL B-1118 / 37Y).